A 294-amino-acid polypeptide reads, in one-letter code: UDP-3-O-acyl-N-acetylglucosamine deacetylase (294 aa).

Residues His-75, His-232, and Asp-236 each coordinate Zn(2+). Residue His-259 is the Proton donor of the active site.

This sequence belongs to the LpxC family. It depends on Zn(2+) as a cofactor.

The enzyme catalyses a UDP-3-O-[(3R)-3-hydroxyacyl]-N-acetyl-alpha-D-glucosamine + H2O = a UDP-3-O-[(3R)-3-hydroxyacyl]-alpha-D-glucosamine + acetate. The protein operates within glycolipid biosynthesis; lipid IV(A) biosynthesis; lipid IV(A) from (3R)-3-hydroxytetradecanoyl-[acyl-carrier-protein] and UDP-N-acetyl-alpha-D-glucosamine: step 2/6. Functionally, catalyzes the hydrolysis of UDP-3-O-myristoyl-N-acetylglucosamine to form UDP-3-O-myristoylglucosamine and acetate, the committed step in lipid A biosynthesis. This is UDP-3-O-acyl-N-acetylglucosamine deacetylase from Campylobacter curvus (strain 525.92).